Consider the following 1010-residue polypeptide: BrkA autotransporter (1010 aa).

The N-terminal stretch at 1–42 is a signal peptide; the sequence is MYLDRFRQCPSSLQIPRSAWRLHALAAALALAGMARLAPAAA. In terms of domain architecture, Autotransporter spans 742 to 1010; sequence LRADAGGPWA…SFHAGYRYSF (269 aa).

Its subcellular location is the periplasm. The protein localises to the secreted. The protein resides in the cell surface. It localises to the cell outer membrane. Functionally, inhibits the classical pathway of complement activation and prevents accumulation of deposited C4. In Bordetella pertussis (strain Tohama I / ATCC BAA-589 / NCTC 13251), this protein is BrkA autotransporter.